Consider the following 567-residue polypeptide: Dihydroxy-acid dehydratase (567 aa).

Residue C52 participates in [2Fe-2S] cluster binding. Residue D84 participates in Mg(2+) binding. Position 125 (C125) interacts with [2Fe-2S] cluster. Mg(2+) contacts are provided by D126 and K127. K127 bears the N6-carboxylysine mark. C197 is a binding site for [2Fe-2S] cluster. Residue E448 participates in Mg(2+) binding. S474 acts as the Proton acceptor in catalysis.

This sequence belongs to the IlvD/Edd family. As to quaternary structure, homodimer. [2Fe-2S] cluster serves as cofactor. It depends on Mg(2+) as a cofactor.

It carries out the reaction (2R)-2,3-dihydroxy-3-methylbutanoate = 3-methyl-2-oxobutanoate + H2O. The enzyme catalyses (2R,3R)-2,3-dihydroxy-3-methylpentanoate = (S)-3-methyl-2-oxopentanoate + H2O. The protein operates within amino-acid biosynthesis; L-isoleucine biosynthesis; L-isoleucine from 2-oxobutanoate: step 3/4. It participates in amino-acid biosynthesis; L-valine biosynthesis; L-valine from pyruvate: step 3/4. Its function is as follows. Functions in the biosynthesis of branched-chain amino acids. Catalyzes the dehydration of (2R,3R)-2,3-dihydroxy-3-methylpentanoate (2,3-dihydroxy-3-methylvalerate) into 2-oxo-3-methylpentanoate (2-oxo-3-methylvalerate) and of (2R)-2,3-dihydroxy-3-methylbutanoate (2,3-dihydroxyisovalerate) into 2-oxo-3-methylbutanoate (2-oxoisovalerate), the penultimate precursor to L-isoleucine and L-valine, respectively. The protein is Dihydroxy-acid dehydratase of Streptococcus pneumoniae serotype 2 (strain D39 / NCTC 7466).